Reading from the N-terminus, the 185-residue chain is Elongation factor P (185 aa).

Belongs to the elongation factor P family.

It is found in the cytoplasm. The protein operates within protein biosynthesis; polypeptide chain elongation. In terms of biological role, involved in peptide bond synthesis. Stimulates efficient translation and peptide-bond synthesis on native or reconstituted 70S ribosomes in vitro. Probably functions indirectly by altering the affinity of the ribosome for aminoacyl-tRNA, thus increasing their reactivity as acceptors for peptidyl transferase. The protein is Elongation factor P of Clostridium botulinum (strain ATCC 19397 / Type A).